The chain runs to 518 residues: Protein nucleotidyltransferase YdiU (518 aa).

ATP-binding residues include Gly99, Gly101, Arg102, Lys122, Asp134, Gly135, Arg192, and Arg199. The Proton acceptor role is filled by Asp270. Positions 271 and 280 each coordinate Mg(2+). Asp280 is an ATP binding site.

Belongs to the SELO family. The cofactor is Mg(2+). Mn(2+) is required as a cofactor.

It carries out the reaction L-seryl-[protein] + ATP = 3-O-(5'-adenylyl)-L-seryl-[protein] + diphosphate. It catalyses the reaction L-threonyl-[protein] + ATP = 3-O-(5'-adenylyl)-L-threonyl-[protein] + diphosphate. The enzyme catalyses L-tyrosyl-[protein] + ATP = O-(5'-adenylyl)-L-tyrosyl-[protein] + diphosphate. The catalysed reaction is L-histidyl-[protein] + UTP = N(tele)-(5'-uridylyl)-L-histidyl-[protein] + diphosphate. It carries out the reaction L-seryl-[protein] + UTP = O-(5'-uridylyl)-L-seryl-[protein] + diphosphate. It catalyses the reaction L-tyrosyl-[protein] + UTP = O-(5'-uridylyl)-L-tyrosyl-[protein] + diphosphate. In terms of biological role, nucleotidyltransferase involved in the post-translational modification of proteins. It can catalyze the addition of adenosine monophosphate (AMP) or uridine monophosphate (UMP) to a protein, resulting in modifications known as AMPylation and UMPylation. The sequence is that of Protein nucleotidyltransferase YdiU from Methylobacillus flagellatus (strain ATCC 51484 / DSM 6875 / VKM B-1610 / KT).